The chain runs to 680 residues: Extracellular matrix protein 2 (680 aa).

An N-terminal signal peptide occupies residues 1–20 (MKFSSLYCFLLLLIFQTDFG). The region spanning 100–157 (GHCLANGMIMYNKAVWSPEPCTTCLCLNGKVLCDETKCHPQMCPQTIIPEGECCPVCS) is the VWFC domain. Residues 189 to 198 (QLEEDEEEVK) are compositionally biased toward acidic residues. The segment at 189–293 (QLEEDEEEVK…RLPIPATPRG (105 aa)) is disordered. Basic and acidic residues predominate over residues 223–238 (QSREGKAQRPEEEGRQ). Acidic residues predominate over residues 249–272 (NEEDDDEEEEDDDDEEEDDDDEDE). The Cell attachment site motif lies at 275–277 (RGD). An LRRNT domain is found at 288–325 (PATPRGIPSLPSMCSLSYKTISCISADLTQIPPLTAPE). LRR repeat units lie at residues 349 to 369 (NLER…GPKA), 375 to 396 (NLMR…LPST), 397 to 417 (LEEL…SLSD), 420 to 440 (QLVT…NSLA), 446 to 466 (SLSY…GLPA), 467 to 488 (SIEE…SFNH), 491 to 511 (KINV…APLA), 517 to 538 (NLES…LPKS), 539 to 559 (LVHL…VFGH), 563 to 583 (GLEY…DRVS), 590 to 611 (SLRE…VQEM), 613 to 634 (ALHF…QICN), and 642 to 665 (NLQH…AFSC). An N-linked (GlcNAc...) asparagine glycan is attached at Asn359. A glycan (N-linked (GlcNAc...) asparagine) is linked at Asn430. Asn487 carries N-linked (GlcNAc...) asparagine glycosylation.

The protein belongs to the small leucine-rich proteoglycan (SLRP) family. SLRP class I subfamily. In terms of assembly, interacts with numerous extracellular matrix proteins. Interacts with MSL1 and RASSF1.

It localises to the secreted. Its subcellular location is the extracellular space. The protein resides in the extracellular matrix. In terms of biological role, promotes matrix assembly and cell adhesiveness. In Bos taurus (Bovine), this protein is Extracellular matrix protein 2 (ECM2).